Here is a 231-residue protein sequence, read N- to C-terminus: AA9 family lytic polysaccharide monooxygenase C (231 aa).

Positions 1 to 18 (MKSGLLFTTASLALTASA) are cleaved as a signal peptide. His-19 lines the Cu(2+) pocket. A disulfide bond links Cys-60 and Cys-179. Residues Asn-69 and Asn-143 are each glycosylated (N-linked (GlcNAc...) asparagine). O2 is bound by residues His-165 and Gln-174. Residue Tyr-176 coordinates Cu(2+).

The protein belongs to the polysaccharide monooxygenase AA9 family. Cu(2+) serves as cofactor.

Its subcellular location is the secreted. It catalyses the reaction [(1-&gt;4)-beta-D-glucosyl]n+m + reduced acceptor + O2 = 4-dehydro-beta-D-glucosyl-[(1-&gt;4)-beta-D-glucosyl]n-1 + [(1-&gt;4)-beta-D-glucosyl]m + acceptor + H2O.. Its function is as follows. Lytic polysaccharide monooxygenase (LPMO) that depolymerizes crystalline and amorphous polysaccharides via the oxidation of scissile alpha- or beta-(1-4)-glycosidic bonds, yielding C1 oxidation products. Catalysis by LPMOs requires the reduction of the active-site copper from Cu(II) to Cu(I) by a reducing agent and H(2)O(2) or O(2) as a cosubstrate. The polypeptide is AA9 family lytic polysaccharide monooxygenase C (Emericella nidulans (strain FGSC A4 / ATCC 38163 / CBS 112.46 / NRRL 194 / M139) (Aspergillus nidulans)).